Here is a 245-residue protein sequence, read N- to C-terminus: MRVDGRGKAELRHIHIHTNYLKHPEGSVLIEVGDTKVICSATIEERVPPFMRGEGKGWVTAEYSMIPRATEQRTIRESSKGKVTGRTMEIQRLIGRALRAVVDLEALGERTVWIDCDVIQADGGTRTASITGAYVAMVLAFEKLLQAEKVSKIPVKDYLAATSVGVVEEQGVVLDLNYAEDSKADVDMNVIMTGKGQFVEVQGTGEEATFSRAELNELLDAAEQGIFQLVEKQKEALGDIVSHIE.

Residues arginine 86 and 124 to 126 (GTR) contribute to the phosphate site.

Belongs to the RNase PH family. As to quaternary structure, homohexameric ring arranged as a trimer of dimers.

It catalyses the reaction tRNA(n+1) + phosphate = tRNA(n) + a ribonucleoside 5'-diphosphate. Phosphorolytic 3'-5' exoribonuclease that plays an important role in tRNA 3'-end maturation. Removes nucleotide residues following the 3'-CCA terminus of tRNAs; can also add nucleotides to the ends of RNA molecules by using nucleoside diphosphates as substrates, but this may not be physiologically important. Probably plays a role in initiation of 16S rRNA degradation (leading to ribosome degradation) during starvation. The protein is Ribonuclease PH of Bacillus mycoides (strain KBAB4) (Bacillus weihenstephanensis).